Consider the following 246-residue polypeptide: MIKFENVSKIYPNGTKGLTDVNLQINQGEFVAIIGTSGAGKSTLIRCVNGLNDITSGSLIVNDTEVSKLKGKELRKFRRHVGMIFQSYNLVPRVTVLKNVMFARVPDMSLFKVIFGLFSKEDKLVALDSLNKVGILDKAYIRADQLSGGQQQRVSLARALSQESEILLADEPVSALDPVTAKEVMDDFKRINEEFNKTILLNIHHVELALEYASRIIAVKKGKIVYDGPSQEVTKEILDEVYRKEA.

One can recognise an ABC transporter domain in the interval 2–246 (IKFENVSKIY…ILDEVYRKEA (245 aa)). 35–42 (GTSGAGKS) is a binding site for ATP.

It belongs to the ABC transporter superfamily. Phosphonates importer (TC 3.A.1.9.1) family. The complex is composed of two ATP-binding proteins (PhnC), two transmembrane proteins (PhnE) and a solute-binding protein (PhnD).

It is found in the cell membrane. It catalyses the reaction phosphonate(out) + ATP + H2O = phosphonate(in) + ADP + phosphate + H(+). Part of the ABC transporter complex PhnCDE involved in phosphonates import. Responsible for energy coupling to the transport system. This Lactococcus lactis subsp. lactis (strain IL1403) (Streptococcus lactis) protein is Phosphonates import ATP-binding protein PhnC.